Reading from the N-terminus, the 100-residue chain is Apolipoprotein C-II (100 aa).

Positions 1 to 22 (MDSRFLLALFLVLLVLGCEVQA) are cleaved as a signal peptide. The interval 66-74 (SVDEKLRDM) is lipid binding. Residues 78–100 (SSAAMTTYAIIFTDQILTLLKGE) are lipoprotein lipase cofactor.

Belongs to the apolipoprotein C2 family. Proapolipoprotein C-II is synthesized as a sialic acid containing glycoprotein which is subsequently desialylated prior to its proteolytic processing. Post-translationally, proapolipoprotein C-II, the major form found in plasma undergoes proteolytic cleavage of its N-terminal hexapeptide to generate the mature form apolipoprotein C-II, which occurs as the minor form in plasma.

It localises to the secreted. Component of chylomicrons, very low-density lipoproteins (VLDL), low-density lipoproteins (LDL), and high-density lipoproteins (HDL) in plasma. Plays an important role in lipoprotein metabolism as an activator of lipoprotein lipase. The polypeptide is Apolipoprotein C-II (APOC2) (Myodes glareolus (Bank vole)).